A 156-amino-acid polypeptide reads, in one-letter code: Small ribosomal subunit protein uS7 (156 aa).

Belongs to the universal ribosomal protein uS7 family. In terms of assembly, part of the 30S ribosomal subunit. Contacts proteins S9 and S11.

One of the primary rRNA binding proteins, it binds directly to 16S rRNA where it nucleates assembly of the head domain of the 30S subunit. Is located at the subunit interface close to the decoding center, probably blocks exit of the E-site tRNA. The chain is Small ribosomal subunit protein uS7 from Prochlorococcus marinus (strain MIT 9211).